Consider the following 273-residue polypeptide: Undecaprenyl-diphosphatase (273 aa).

The next 8 membrane-spanning stretches (helical) occupy residues 4–24 (IELL…WLPI), 45–65 (FMSM…VVLF), 84–104 (TFTL…MIPF), 112–132 (FFNP…FIII), 149–169 (ITYQ…IPGT), 187–207 (YVAA…ASLL), 219–239 (AEIV…IIVI), and 251–271 (FKVF…YFLL).

Belongs to the UppP family.

It localises to the cell membrane. It catalyses the reaction di-trans,octa-cis-undecaprenyl diphosphate + H2O = di-trans,octa-cis-undecaprenyl phosphate + phosphate + H(+). In terms of biological role, catalyzes the dephosphorylation of undecaprenyl diphosphate (UPP). Confers resistance to bacitracin. The sequence is that of Undecaprenyl-diphosphatase from Lachnoclostridium phytofermentans (strain ATCC 700394 / DSM 18823 / ISDg) (Clostridium phytofermentans).